We begin with the raw amino-acid sequence, 404 residues long: MDSILVVNAGSSSVKFQVFSAEGEGKLLRQIKGQVDGIGSRPRLRASGADNEPLADRAYPIESVSDVPAAMGVAGGWLRDELRISPMAVGHRVVHGGPDYDRPVLIDHGVVARLERFVALAPLHQPNNLDPIRSLLANFPALPQVACFDTAFHRTHDAVADYYAIPYQFYVEGVRRYGFHGLSYEYVAKTLPHVAPEIAKGRVIVAHLGSGASMCALKGGRSIESTMGFTALDGLPMGTRPGQIDPGVVLYLVSEKGMSPAKAQDFLYRDCGLKGLSGVSNDMRELEASEDPKAKLAVDYFVYRVGLNAGMLAAALQGLDAFVFTAGIGENSMRIRARIADQLAWLGVTLDPTQNSRHARLISGSDSRIPVYVIPTDEELMIAQHTLSLLLDRSSSSVRHERVS.

Asn8 lines the Mg(2+) pocket. Residue Lys15 coordinates ATP. Substrate is bound at residue Arg92. The Proton donor/acceptor role is filled by Asp149. ATP is bound by residues His207–Gly211, Asp282–Arg284, and Gly327–Asn331. Glu378 provides a ligand contact to Mg(2+).

This sequence belongs to the acetokinase family. In terms of assembly, homodimer. The cofactor is Mg(2+). Mn(2+) serves as cofactor.

The protein localises to the cytoplasm. The catalysed reaction is acetate + ATP = acetyl phosphate + ADP. It participates in metabolic intermediate biosynthesis; acetyl-CoA biosynthesis; acetyl-CoA from acetate: step 1/2. Its function is as follows. Catalyzes the formation of acetyl phosphate from acetate and ATP. Can also catalyze the reverse reaction. This Nitrobacter hamburgensis (strain DSM 10229 / NCIMB 13809 / X14) protein is Acetate kinase.